The chain runs to 374 residues: Probable dual-specificity RNA methyltransferase RlmN (374 aa).

Basic and acidic residues predominate over residues 1-17 (MEKNEISEERRTQEKEK). A disordered region spans residues 1–22 (MEKNEISEERRTQEKEKQHGHR). Glu119 functions as the Proton acceptor in the catalytic mechanism. The 236-residue stretch at 125–360 (SEERITACIS…VTVRKSQGAT (236 aa)) folds into the Radical SAM core domain. Cysteines 132 and 365 form a disulfide. The [4Fe-4S] cluster site is built by Cys139, Cys143, and Cys146. Residues 190–191 (GE), Ser223, 246–248 (SLH), and Asn322 each bind S-adenosyl-L-methionine. Cys365 (S-methylcysteine intermediate) is an active-site residue.

Belongs to the radical SAM superfamily. RlmN family. [4Fe-4S] cluster is required as a cofactor.

It is found in the cytoplasm. It carries out the reaction adenosine(2503) in 23S rRNA + 2 reduced [2Fe-2S]-[ferredoxin] + 2 S-adenosyl-L-methionine = 2-methyladenosine(2503) in 23S rRNA + 5'-deoxyadenosine + L-methionine + 2 oxidized [2Fe-2S]-[ferredoxin] + S-adenosyl-L-homocysteine. The enzyme catalyses adenosine(37) in tRNA + 2 reduced [2Fe-2S]-[ferredoxin] + 2 S-adenosyl-L-methionine = 2-methyladenosine(37) in tRNA + 5'-deoxyadenosine + L-methionine + 2 oxidized [2Fe-2S]-[ferredoxin] + S-adenosyl-L-homocysteine. Functionally, specifically methylates position 2 of adenine 2503 in 23S rRNA and position 2 of adenine 37 in tRNAs. This is Probable dual-specificity RNA methyltransferase RlmN from Chlorobaculum tepidum (strain ATCC 49652 / DSM 12025 / NBRC 103806 / TLS) (Chlorobium tepidum).